Reading from the N-terminus, the 354-residue chain is Sulfate/thiosulfate import ATP-binding protein CysA 2 (354 aa).

The ABC transporter domain maps to 3–237 (IHIQQVNKHF…PSNPFVYEFL (235 aa)). ATP is bound at residue 35-42 (GPSGSGKT).

Belongs to the ABC transporter superfamily. Sulfate/tungstate importer (TC 3.A.1.6) family. As to quaternary structure, the complex is composed of two ATP-binding proteins (CysA), two transmembrane proteins (CysT and CysW) and a solute-binding protein (CysP).

The protein resides in the cell inner membrane. The enzyme catalyses sulfate(out) + ATP + H2O = sulfate(in) + ADP + phosphate + H(+). It carries out the reaction thiosulfate(out) + ATP + H2O = thiosulfate(in) + ADP + phosphate + H(+). Functionally, part of the ABC transporter complex CysAWTP involved in sulfate/thiosulfate import. Responsible for energy coupling to the transport system. The polypeptide is Sulfate/thiosulfate import ATP-binding protein CysA 2 (Shewanella oneidensis (strain ATCC 700550 / JCM 31522 / CIP 106686 / LMG 19005 / NCIMB 14063 / MR-1)).